Reading from the N-terminus, the 144-residue chain is MVIIMPTKTITLKVPSNISKKKIEEAIKKLELEEKYKKTENFKLFVKDEDLKMKIYKIAEFVEDYLKKKYSDEEFEIVLDYDGIDDKVVVEIVFKKKLDKRELKDIKVIIRKLKEIIFDAWRKVDEKYPDMRGFLIVTSDLEVL.

This is an uncharacterized protein from Methanocaldococcus jannaschii (strain ATCC 43067 / DSM 2661 / JAL-1 / JCM 10045 / NBRC 100440) (Methanococcus jannaschii).